Reading from the N-terminus, the 284-residue chain is Homeobox protein SIX1 (284 aa).

Positions 124–183 (GEETSYCFKEKSRGVLREWYAHNPYPSPREKRELAEATGLTTTQVSNWFKNRRQRDRAAE) form a DNA-binding region, homeobox. The segment at 168 to 284 (VSNWFKNRRQ…LTSSLVDLGS (117 aa)) is disordered. Positions 179 to 190 (DRAAEAKERENT) are enriched in basic and acidic residues. A compositionally biased stretch (polar residues) spans 227–284 (DQNSVLLLQSNMGHARSSNYSLPGLTASQPSHGLQAHQHQLQDSLLGPLTSSLVDLGS).

This sequence belongs to the SIX/Sine oculis homeobox family. As to quaternary structure, interacts with DACH1. Interacts with EYA1. Interacts with EYA2. Interacts with CDH1. Interacts with TBX18. Interacts with CEBPA. Interacts with CEBPB. Interacts with EBF2. Post-translationally, phosphorylated during interphase; becomes hyperphosphorylated during mitosis. Hyperphosphorylation impairs binding to promoter elements. In terms of processing, ubiquitinated by the anaphase promoting complex (APC), leading to its proteasomal degradation. In terms of tissue distribution, expressed in phalangeal tendons and in skeletal muscle and in head and body mesenchyme.

The protein resides in the nucleus. The protein localises to the cytoplasm. In terms of biological role, transcription factor that is involved in the regulation of cell proliferation, apoptosis and embryonic development. Plays an important role in the development of several organs, including kidney, muscle and inner ear. Depending on context, functions as a transcriptional repressor or activator. Lacks an activation domain, and requires interaction with EYA family members for transcription activation. Mediates nuclear translocation of EYA1 and EYA2. Binds the 5'-TCA[AG][AG]TTNC-3' motif present in the MEF3 element in the MYOG promoter and CIDEA enhancer. Regulates the expression of numerous genes, including MYC, CCNA1, CCND1 and EZR. Acts as an activator of the IGFBP5 promoter, probably coactivated by EYA2. Repression of precursor cell proliferation in myoblasts is switched to activation through recruitment of EYA3 to the SIX1-DACH1 complex. During myogenesis, seems to act together with EYA2 and DACH2. Regulates the expression of CCNA1. Promotes brown adipocyte differentiation. The sequence is that of Homeobox protein SIX1 (Six1) from Mus musculus (Mouse).